The sequence spans 149 residues: Putative pre-16S rRNA nuclease (149 aa).

The protein belongs to the YqgF nuclease family.

The protein localises to the cytoplasm. In terms of biological role, could be a nuclease involved in processing of the 5'-end of pre-16S rRNA. The protein is Putative pre-16S rRNA nuclease of Cupriavidus metallidurans (strain ATCC 43123 / DSM 2839 / NBRC 102507 / CH34) (Ralstonia metallidurans).